A 352-amino-acid polypeptide reads, in one-letter code: Probable transcription factor At1g11510 (352 aa).

2 disordered regions span residues 1–132 (MSRR…GGEE) and 239–269 (MKSN…KNNC). Positions 56-66 (SGSDEETDSDS) are enriched in acidic residues. Composition is skewed to basic and acidic residues over residues 89-101 (KTSE…RSLE), 117-132 (VSGE…GGEE), and 241-259 (SNEK…HELD).

Belongs to the GeBP family.

The chain is Probable transcription factor At1g11510 from Arabidopsis thaliana (Mouse-ear cress).